The sequence spans 637 residues: Probable serine/threonine-protein kinase DDB_G0283065 (637 aa).

Disordered regions lie at residues 36–88 and 155–234; these read NNNN…KFNR and NSNN…RFNN. Residues 53–85 are compositionally biased toward low complexity; it reads NNSTTKSIDNNNNNTNNSNSNNNNNDNIKNNNK. Positions 236 to 629 constitute a Protein kinase domain; that stretch reads FNDVRVLGKG…NQISTDYDNF (394 aa). ATP-binding positions include 242 to 250 and Lys265; that span reads LGKGGFGIV. The active-site Proton acceptor is the Asp479.

It belongs to the protein kinase superfamily. Ser/Thr protein kinase family. GCN2 subfamily.

The catalysed reaction is L-seryl-[protein] + ATP = O-phospho-L-seryl-[protein] + ADP + H(+). It catalyses the reaction L-threonyl-[protein] + ATP = O-phospho-L-threonyl-[protein] + ADP + H(+). The sequence is that of Probable serine/threonine-protein kinase DDB_G0283065 from Dictyostelium discoideum (Social amoeba).